A 712-amino-acid polypeptide reads, in one-letter code: TIR domain-containing adapter molecule 1 (712 aa).

Residues 1-153 (MACTGPSLPS…CGWDIAGDPG (153 aa)) form a TRIF-NTD region. Positions 84–91 (EDPEEPPD) match the TRAF6-binding motif. Residues 207–210 (LEIS) carry the pLxIS motif motif. Residue Ser210 is modified to Phosphoserine; by TBK1. Disordered regions lie at residues 216–316 (PFLS…SLPL) and 336–384 (LSVE…LFPS). Residue Lys229 forms a Glycyl lysine isopeptide (Lys-Gly) (interchain with G-Cter in ubiquitin) linkage. The TRAF6-binding signature appears at 248–255 (QEPEEMSW). The span at 265–275 (PELPSSPPPGL) shows a compositional bias: pro residues. Positions 299 to 309 (NYPVECTEGSA) match the TRAF6-binding motif. Residues 347–369 (KPCPPTPTTPETSPPPPPPPPSS) show a composition bias toward pro residues. A TIR domain is found at 393–553 (KFYNFVILHA…QDTRALREQS (161 aa)). The sufficient to induce apoptosis stretch occupies residues 512–712 (RLDEHSQIFA…APEDKTQEAE (201 aa)). Pro residues-rich tracts occupy residues 620 to 633 (PFPTWPGCPQPPPL) and 640 to 649 (TPPPPSPQPA). A disordered region spans residues 620–677 (PFPTWPGCPQPPPLHAWQAGTPPPPSPQPAAFPQSLPFPQSPAFPTASPAPPQSPGLQ). Over residues 650 to 666 (AFPQSLPFPQSPAFPTA) the composition is skewed to low complexity.

Homodimer. Found in a multi-helicase-TICAM1 complex at least composed of DHX36, DDX1, DDX21 and TICAM1; this complex exists in resting cells with or without poly(I:C) RNA ligand stimulation. Interacts (via TIR domain) with DDX21 (via C-terminus). Interacts (via TIR domain) with DHX36 (via C-terminus). Interacts with AZI2 and IRF7. Interacts with TICAM2 in TLR4 recruitment. Interaction with PIAS4 inhibits the TICAM1-induced NF-kappa-B, IRF and IFNB1 activation. Interacts with IKBKB and IKBKE. Interaction with SARM1 blocks TICAM1-dependent transcription factor activation. Interacts with TRAF3. Interacts (when phosphorylated) with IRF3; following activation and phosphorylation on the pLxIS motif by TBK1, recruits IRF3. Interacts with TBK1, TRAF6 and RIPK1 and these interactions are enhanced in the presence of WDFY1. Interacts with TRAFD1. Interacts with UBQLN1 (via UBA domain). Interacts with TLR4. Interacts with WDFY1 in response to poly(I:C). Interacts (via the TIR domain) with TLR3 in response to poly(I:C) and this interaction is enhanced in the presence of WDFY1. Interacts with TRIM56. Component of a multi-helicase-TICAM1 complex that acts as a cytoplasmic sensor of viral double-stranded RNA (dsRNA) and plays a role in the activation of a cascade of antiviral responses including the induction of pro-inflammatory cytokines. Interacts (via the TIR domain) with TLR5. Interacts with TRIM8. Interacts with TAX1BP1 and TRIM32; these interactions target TICAM1 to TAX1BP1-mediated selective autophagic degradation. Interacts with DDX50. As to quaternary structure, (Microbial infection) Interacts with hepatitis C virus (HCV) NS3/4A protease; this interaction leads to TICAM1 cleavage, thereby disrupting TLR3 signaling and preventing the establishment of an antiviral state. In terms of assembly, (Microbial infection) Interacts with Seneca Valley virus protease 3C; this interaction allows the cleavage of TICAM1/TRIF and subsequent suppression of host innate immunity. (Microbial infection) Interacts (via C-terminus) with coxsackievirus B3 (CVB3) protease 3C. Post-translationally, phosphorylated by TBK1. Following activation, phosphorylated by TBK1 at Ser-210 in the pLxIS motif. The phosphorylated pLxIS motif constitutes an IRF3-binding motif, leading to recruitment of the transcription factor IRF3 to induce type-I interferons and other cytokines. In terms of processing, polyubiquitinated at Lys-229 by TRIM38 with 'Lys-48'-linked chains, leading to proteasomal degradation. Polyubiquitinated with 'Lys-6'- and 'Lys-33'-linked chains in a TRIM8-dependent manner; ubiquitination disrupts the interaction with TBK1 and subsequent interferon production. (Microbial infection) Cleaved and degraded by hepatitis A virus (HAV) protein 3CD allowing the virus to disrupt host TLR3 signaling. Post-translationally, (Microbial infection) Cleaved by CVB3 protease 3C allowing the virus to disrupt host TLR3 signaling. In terms of processing, (Microbial infection) Cleaved by Seneca Valley virus protease 3C allowing the virus to disrupt host TLR3 signaling. (Microbial infection) Cleaved by protease 3C of human enterovirus D68 (EV68) allowing the virus to disrupt host TLR3 signaling. Post-translationally, (Microbial infection) Cleaved by HCV protease NS3/4A, thereby disrupting TLR3 signaling and preventing the establishment of an antiviral state. In terms of tissue distribution, ubiquitously expressed but with higher levels in liver.

The protein resides in the cytoplasmic vesicle. It localises to the autophagosome. Its subcellular location is the cytoplasm. It is found in the cytosol. The protein localises to the mitochondrion. Functionally, involved in innate immunity against invading pathogens. Adapter used by TLR3, TLR4 (through TICAM2) and TLR5 to mediate NF-kappa-B and interferon-regulatory factor (IRF) activation, and to induce apoptosis. Ligand binding to these receptors results in TRIF recruitment through its TIR domain. Distinct protein-interaction motifs allow recruitment of the effector proteins TBK1, TRAF6 and RIPK1, which in turn, lead to the activation of transcription factors IRF3 and IRF7, NF-kappa-B and FADD respectively. Phosphorylation by TBK1 on the pLxIS motif leads to recruitment and subsequent activation of the transcription factor IRF3 to induce expression of type I interferon and exert a potent immunity against invading pathogens. Component of a multi-helicase-TICAM1 complex that acts as a cytoplasmic sensor of viral double-stranded RNA (dsRNA) and plays a role in the activation of a cascade of antiviral responses including the induction of pro-inflammatory cytokines. The sequence is that of TIR domain-containing adapter molecule 1 (TICAM1) from Homo sapiens (Human).